Reading from the N-terminus, the 716-residue chain is Phosphoribosylformylglycinamidine synthase subunit PurL (716 aa).

His33 is an active-site residue. Tyr36 is an ATP binding site. Position 77 (Glu77) interacts with Mg(2+). Residues 78 to 81 and Arg100 each bind substrate; that span reads SHNH. The active-site Proton acceptor is His79. Asp101 contacts Mg(2+). Gln225 contacts substrate. Asp253 serves as a coordination point for Mg(2+). 297–299 serves as a coordination point for substrate; sequence ESQ. 2 residues coordinate ATP: Asn475 and Gly512. Residue Asn513 participates in Mg(2+) binding. A substrate-binding site is contributed by Ser515.

It belongs to the FGAMS family. In terms of assembly, monomer. Part of the FGAM synthase complex composed of 1 PurL, 1 PurQ and 2 PurS subunits.

The protein localises to the cytoplasm. It catalyses the reaction N(2)-formyl-N(1)-(5-phospho-beta-D-ribosyl)glycinamide + L-glutamine + ATP + H2O = 2-formamido-N(1)-(5-O-phospho-beta-D-ribosyl)acetamidine + L-glutamate + ADP + phosphate + H(+). The protein operates within purine metabolism; IMP biosynthesis via de novo pathway; 5-amino-1-(5-phospho-D-ribosyl)imidazole from N(2)-formyl-N(1)-(5-phospho-D-ribosyl)glycinamide: step 1/2. Functionally, part of the phosphoribosylformylglycinamidine synthase complex involved in the purines biosynthetic pathway. Catalyzes the ATP-dependent conversion of formylglycinamide ribonucleotide (FGAR) and glutamine to yield formylglycinamidine ribonucleotide (FGAM) and glutamate. The FGAM synthase complex is composed of three subunits. PurQ produces an ammonia molecule by converting glutamine to glutamate. PurL transfers the ammonia molecule to FGAR to form FGAM in an ATP-dependent manner. PurS interacts with PurQ and PurL and is thought to assist in the transfer of the ammonia molecule from PurQ to PurL. In Methanosarcina mazei (strain ATCC BAA-159 / DSM 3647 / Goe1 / Go1 / JCM 11833 / OCM 88) (Methanosarcina frisia), this protein is Phosphoribosylformylglycinamidine synthase subunit PurL.